The primary structure comprises 186 residues: Elongation factor P (186 aa).

This sequence belongs to the elongation factor P family.

The protein resides in the cytoplasm. The protein operates within protein biosynthesis; polypeptide chain elongation. In terms of biological role, involved in peptide bond synthesis. Stimulates efficient translation and peptide-bond synthesis on native or reconstituted 70S ribosomes in vitro. Probably functions indirectly by altering the affinity of the ribosome for aminoacyl-tRNA, thus increasing their reactivity as acceptors for peptidyl transferase. This Shewanella piezotolerans (strain WP3 / JCM 13877) protein is Elongation factor P.